A 60-amino-acid chain; its full sequence is Large ribosomal subunit protein bL33 (60 aa).

This sequence belongs to the bacterial ribosomal protein bL33 family.

In Chlorobium limicola (strain DSM 245 / NBRC 103803 / 6330), this protein is Large ribosomal subunit protein bL33.